The chain runs to 401 residues: UPF0242 protein CCA_01002 (401 aa).

It belongs to the UPF0242 family.

The protein is UPF0242 protein CCA_01002 of Chlamydia caviae (strain ATCC VR-813 / DSM 19441 / 03DC25 / GPIC) (Chlamydophila caviae).